The primary structure comprises 664 residues: Sorbicillinoid biosynthetic cluster transcription factor sor3 (664 aa).

Positions 40–67 (CQSCRASKVKCDGGRPVCARCQKRGRAC) form a DNA-binding region, zn(2)-C6 fungal-type. A disordered region spans residues 68–102 (SYSQHDAASPRGRGRQRAKAPTRQPRPIRSRASVE).

Its subcellular location is the nucleus. Functionally, transcription factor that acts in concert with sor4 which is a transcriptional activator of the gene cluster that mediates the biosynthesis of sorbicillinoids, a diverse group of yellow secondary metabolites that restrict growth of competing pathogenic fungi but not of bacteria. Regulates the cluster genes in a light dependent manner. Also plays a direct or indirect role in regulation of paracelsin biosynthesis and cellulase gene expression. The chain is Sorbicillinoid biosynthetic cluster transcription factor sor3 from Hypocrea jecorina (strain QM6a) (Trichoderma reesei).